The primary structure comprises 316 residues: 4-hydroxyphenylacetate decarboxylase activating enzyme (316 aa).

Residues 20–307 (HDGPGCRTTV…QDIFLDNGIA (288 aa)) form the Radical SAM core domain. [4Fe-4S] cluster-binding residues include C34, C38, C41, C60, C66, C69, and C105. 40-42 (WCA) provides a ligand contact to S-adenosyl-L-methionine. The 4Fe-4S ferredoxin-type domain maps to 84–115 (NKPVIDWNICKDCESFECVNSCYYNAFKLCAK). S-adenosyl-L-methionine is bound by residues G144, 193–195 (DIK), and H267.

Belongs to the organic radical-activating enzymes family. Monomer. The cofactor is [4Fe-4S] cluster.

The catalysed reaction is glycyl-[protein] + reduced [flavodoxin] + S-adenosyl-L-methionine = glycin-2-yl radical-[protein] + semiquinone [flavodoxin] + 5'-deoxyadenosine + L-methionine + H(+). Its function is as follows. Catalyzes activation of 4-hydroxyphenylacetate decarboxylase under anaerobic conditions by generation of an organic free radical on a glycine residue, via a homolytic cleavage of S-adenosyl-L-methionine (SAM). This chain is 4-hydroxyphenylacetate decarboxylase activating enzyme, found in Clostridioides difficile (strain CD196) (Peptoclostridium difficile).